A 137-amino-acid chain; its full sequence is Large ribosomal subunit protein uL13 (137 aa).

It belongs to the universal ribosomal protein uL13 family. In terms of assembly, part of the 50S ribosomal subunit.

Its function is as follows. This protein is one of the early assembly proteins of the 50S ribosomal subunit, although it is not seen to bind rRNA by itself. It is important during the early stages of 50S assembly. This is Large ribosomal subunit protein uL13 from Methanocaldococcus jannaschii (strain ATCC 43067 / DSM 2661 / JAL-1 / JCM 10045 / NBRC 100440) (Methanococcus jannaschii).